The following is a 51-amino-acid chain: Insulin (51 aa).

Disulfide bonds link cysteine 7–cysteine 36, cysteine 19–cysteine 49, and cysteine 35–cysteine 40.

Belongs to the insulin family. As to quaternary structure, heterodimer of a B chain and an A chain linked by two disulfide bonds.

Its subcellular location is the secreted. In terms of biological role, insulin decreases blood glucose concentration. It increases cell permeability to monosaccharides, amino acids and fatty acids. It accelerates glycolysis, the pentose phosphate cycle, and glycogen synthesis in liver. The protein is Insulin (INS) of Myocastor coypus (Coypu).